Here is a 528-residue protein sequence, read N- to C-terminus: GMP synthase [glutamine-hydrolyzing] (528 aa).

One can recognise a Glutamine amidotransferase type-1 domain in the interval 13-204 (SIVILDFGSQ…VHNICRSKPD (192 aa)). Residue Cys90 is the Nucleophile of the active site. Catalysis depends on residues His178 and Glu180. Residues 205–403 (WTTNTFIDEA…LGLPEEIVNR (199 aa)) form the GMPS ATP-PPase domain. 232–238 (SGGVDSS) is an ATP binding site.

Homodimer.

It catalyses the reaction XMP + L-glutamine + ATP + H2O = GMP + L-glutamate + AMP + diphosphate + 2 H(+). Its pathway is purine metabolism; GMP biosynthesis; GMP from XMP (L-Gln route): step 1/1. Its function is as follows. Catalyzes the synthesis of GMP from XMP. The chain is GMP synthase [glutamine-hydrolyzing] from Prochlorococcus marinus (strain SARG / CCMP1375 / SS120).